A 443-amino-acid polypeptide reads, in one-letter code: Probable D-serine dehydratase (443 aa).

Lys-106 bears the N6-(pyridoxal phosphate)lysine mark.

Belongs to the serine/threonine dehydratase family. DsdA subfamily. Requires pyridoxal 5'-phosphate as cofactor.

It carries out the reaction D-serine = pyruvate + NH4(+). This is Probable D-serine dehydratase from Cupriavidus pinatubonensis (strain JMP 134 / LMG 1197) (Cupriavidus necator (strain JMP 134)).